A 417-amino-acid chain; its full sequence is Metal-binding activator 1 (417 aa).

Positions M1–S40 form a DNA-binding region, copper-fist. Positions 11, 14, 23, and 25 each coordinate Zn(2+). Disordered regions lie at residues F128 to P198 and Y216 to H242. Position 143 is a phosphoserine (S143). Positions S153 to S178 are enriched in basic and acidic residues. Polar residues-rich tracts occupy residues Q179–A190 and E228–I238. A run of 2 repeats spans residues C264 to H279 and C322 to H337. Residues C264–H337 are 2 X 16 AA repeat of C-X-C-X(4)-C-X-C-X-X-C-X-X-H.

The protein localises to the nucleus. Functionally, regulatory protein involved in Cu/Fe utilization and stress resistance. Involved in basal level transcription of FRE1 and H(2)O(2)-induced transcription of CTT1. Regulates the transcription of CTR1 and CTR3 via the copper ion responsive elements in their promoters. Required for degradation of CTR1. This is Metal-binding activator 1 (MAC1) from Saccharomyces cerevisiae (strain ATCC 204508 / S288c) (Baker's yeast).